The primary structure comprises 275 residues: NH(3)-dependent NAD(+) synthetase (275 aa).

ATP is bound at residue G46–S53. Mg(2+) is bound at residue D52. Deamido-NAD(+) is bound at residue R140. T160 is a binding site for ATP. Mg(2+) is bound at residue E165. Residues K173 and D180 each contribute to the deamido-NAD(+) site. ATP is bound by residues K189 and T211. H260–K261 provides a ligand contact to deamido-NAD(+).

It belongs to the NAD synthetase family. Homodimer.

It carries out the reaction deamido-NAD(+) + NH4(+) + ATP = AMP + diphosphate + NAD(+) + H(+). It functions in the pathway cofactor biosynthesis; NAD(+) biosynthesis; NAD(+) from deamido-NAD(+) (ammonia route): step 1/1. Functionally, catalyzes the ATP-dependent amidation of deamido-NAD to form NAD. Uses ammonia as a nitrogen source. This Escherichia coli O157:H7 protein is NH(3)-dependent NAD(+) synthetase.